A 149-amino-acid chain; its full sequence is Deoxyuridine 5'-triphosphate nucleotidohydrolase (149 aa).

Residues 68–70 (RSG), Asn-81, and 85–87 (LID) each bind substrate.

Belongs to the dUTPase family. Requires Mg(2+) as cofactor.

The catalysed reaction is dUTP + H2O = dUMP + diphosphate + H(+). The protein operates within pyrimidine metabolism; dUMP biosynthesis; dUMP from dCTP (dUTP route): step 2/2. Its function is as follows. This enzyme is involved in nucleotide metabolism: it produces dUMP, the immediate precursor of thymidine nucleotides and it decreases the intracellular concentration of dUTP so that uracil cannot be incorporated into DNA. This chain is Deoxyuridine 5'-triphosphate nucleotidohydrolase, found in Aromatoleum aromaticum (strain DSM 19018 / LMG 30748 / EbN1) (Azoarcus sp. (strain EbN1)).